The following is a 104-amino-acid chain: NADH-quinone oxidoreductase subunit K (104 aa).

The next 3 membrane-spanning stretches (helical) occupy residues 4–24 (VPASAYLTLAIILFCIGLFGA), 31–51 (VIVLVCMELMLNAANLNLVAF), and 67–87 (LFTMSVAAAEAAVGLAILIAL).

Belongs to the complex I subunit 4L family. As to quaternary structure, NDH-1 is composed of 14 different subunits. Subunits NuoA, H, J, K, L, M, N constitute the membrane sector of the complex.

It is found in the cell membrane. It carries out the reaction a quinone + NADH + 5 H(+)(in) = a quinol + NAD(+) + 4 H(+)(out). Its function is as follows. NDH-1 shuttles electrons from NADH, via FMN and iron-sulfur (Fe-S) centers, to quinones in the respiratory chain. The immediate electron acceptor for the enzyme in this species is believed to be a menaquinone. Couples the redox reaction to proton translocation (for every two electrons transferred, four hydrogen ions are translocated across the cytoplasmic membrane), and thus conserves the redox energy in a proton gradient. This chain is NADH-quinone oxidoreductase subunit K, found in Bacillus cytotoxicus (strain DSM 22905 / CIP 110041 / 391-98 / NVH 391-98).